The following is a 221-amino-acid chain: Carbonic anhydrase (221 aa).

Zn(2+) is bound by residues Cys38, Asp40, His99, and Cys102.

Belongs to the beta-class carbonic anhydrase family. Requires Zn(2+) as cofactor.

The catalysed reaction is hydrogencarbonate + H(+) = CO2 + H2O. The polypeptide is Carbonic anhydrase (cynT) (Helicobacter pylori (strain J99 / ATCC 700824) (Campylobacter pylori J99)).